Here is a 2004-residue protein sequence, read N- to C-terminus: Histone acetyltransferase KAT6A (2004 aa).

An SAMD1-like winged helix (WH) domain is found at 1-77 (MVKLANPLYT…LNSYKDPDNP (77 aa)). The required for activation of RUNX1-1 stretch occupies residues 1-144 (MVKLANPLYT…FGGSAASGFH (144 aa)). A required for nuclear localization region spans residues 52-166 (ELSVKDGTIL…HGRLLKDGPL (115 aa)). Positions 95–171 (QNVDWNKLIK…KDGPLYRLNT (77 aa)) constitute an H15 domain. An interaction with PML region spans residues 144–664 (HQQLRLAIKR…RKGYGRFLID (521 aa)). K172 is subject to N6-acetyllysine. 2 PHD-type zinc fingers span residues 206–265 (IPIC…CKTC) and 259–313 (CIEC…CRPR). Positions 312-664 (PRKKGRKLLQ…RKGYGRFLID (353 aa)) are interaction with RUNX1-1. A disordered region spans residues 334-375 (PIGRPKNRLKKQNTVSKGPFSKVRTGPGRGRKRKITLSSQSA). N6-acetyllysine is present on residues K350 and K355. Residue T369 is modified to Phosphothreonine; by PKB/AKT1. Position 420 is a phosphoserine (S420). The interval 441-464 (KRGNRKSSTSDWPTDNQDGWDGKQ) is disordered. Positions 446-457 (KSSTSDWPTDNQ) are enriched in polar residues. S473 is modified (phosphoserine). Positions 488 to 778 (IQEQALQKVG…VDPECLRWTP (291 aa)) are catalytic. An MYST-type HAT domain is found at 504–778 (PQVRCPSVIE…VDPECLRWTP (275 aa)). A mediates interaction with BRPF1, required for histone H3 acetyltransferase activity region spans residues 507–810 (RCPSVIEFGK…EPQCQERELE (304 aa)). A C2HC MYST-type zinc finger spans residues 537 to 562 (LYLCEFCLKYMKSRTILQQHMKKCGW). Residue K604 is modified to N6-acetyllysine; by autocatalysis. Residues 645-649 (SCIMI) and 654-660 (QRKGYGR) each bind acetyl-CoA. Catalysis depends on E680, which acts as the Proton donor/acceptor. S684 lines the acetyl-CoA pocket. 3 disordered regions span residues 785 to 1445 (VVSE…AYQD), 1461 to 1621 (QADE…MMQQ), and 1637 to 1721 (SCVV…MEIP). A phosphoserine mark is found at S787 and S812. Acidic residues predominate over residues 787–803 (SEEEEEEAEEGENEEPQ). N6-acetyllysine is present on K815. Positions 817-836 (VSHENKEQDSYSVESEKKPE) are enriched in basic and acidic residues. K834 participates in a covalent cross-link: Glycyl lysine isopeptide (Lys-Gly) (interchain with G-Cter in SUMO2). Basic residues predominate over residues 864 to 873 (RRGRWGRKNR). Basic and acidic residues predominate over residues 874–888 (KTQERFGDKDSKLLL). At Y899 the chain carries Phosphotyrosine. Composition is skewed to basic and acidic residues over residues 931-942 (GKPDLPKRRLSE) and 953-980 (KSPE…DRAV). 3 positions are modified to phosphoserine: S941, S954, and S974. The residue at position 1007 (K1007) is an N6-acetyllysine. Positions 1009-1030 (TLKRKKPFLHRRRRVRKRKHHN) are enriched in basic residues. Residues 1031–1042 (SSVVTETISETT) are compositionally biased toward low complexity. Composition is skewed to acidic residues over residues 1043–1053 (EVLDEPFEDSD) and 1065–1078 (FEID…DENE). Phosphoserine occurs at positions 1089, 1090, and 1113. Residues 1107–1118 (EEEDEESDDADD) show a composition bias toward acidic residues. A compositionally biased stretch (basic residues) spans 1146-1172 (LKKKKGWPKGKSRKPIHWKKRPGRKPG). Basic and acidic residues predominate over residues 1203–1223 (KIQESEETVEPKEDMPLPEER). Positions 1224-1245 (KEEEEMQAEAEEAEEGEEEDAA) are enriched in acidic residues. Residues 1246–1262 (SSEVPAASPADSSNSPE) are compositionally biased toward low complexity. Residues 1275 to 1287 (EKPRVSEEQRQSE) are compositionally biased toward basic and acidic residues. Positions 1288-1305 (EEQQELEEPEPEEEEDAA) are enriched in acidic residues. Basic and acidic residues-rich tracts occupy residues 1323 to 1345 (HLES…KEEP), 1358 to 1367 (KSREKIKDKE), and 1398 to 1420 (EDSH…HSEL). Residue K1342 forms a Glycyl lysine isopeptide (Lys-Gly) (interchain with G-Cter in SUMO2) linkage. A compositionally biased stretch (low complexity) spans 1481-1503 (SPISSVQSHPSQSVRSVSSPNVP). The span at 1508 to 1529 (GYTQISPEQGSLSAPSMQNMET) shows a compositional bias: polar residues. Residues 1517–1642 (GSLSAPSMQN…KSPQSCVVER (126 aa)) form an interaction with RUNX1-2 region. The segment at 1517-1741 (GSLSAPSMQN…YERIPGDFGA (225 aa)) is interaction with PML. Over residues 1534 to 1548 (DVPSVSDHSQQVVDS) the composition is skewed to low complexity. A compositionally biased stretch (polar residues) spans 1556-1573 (IESTTENYENPSSYDSTM). Low complexity predominate over residues 1574–1621 (GGSICGNSSSQSSCSYGGLSSSSSLTQSSCVVTQQMASMGSSCSMMQQ). A compositionally biased stretch (pro residues) spans 1650-1699 (QPPPPPPQQPQPPPPQPQPAPQPPPPQQQPQQQPQPQPQQPPPPPPPQQQ). Polar residues predominate over residues 1702 to 1712 (LSQCSMNNSFT). Positions 1913 to 1948 (SMNMNTLNAMNSYRMTQPMMNSSYHSNPAYMNQTAQ) are required for activation of RUNX1-2.

This sequence belongs to the MYST (SAS/MOZ) family. As to quaternary structure, component of the MOZ/MORF complex composed at least of ING5, KAT6A, KAT6B, MEAF6 and one of BRPF1, BRD1/BRPF2 and BRPF3. Interacts with RUNX1; phosphorylation of RUNX1 enhances the interaction. Interacts with RUNX2. Interacts with p53/TP53. Interacts with PML (isoform PML-4) and this interaction positively regulates its acetylation activity towards p53/TP53. In terms of processing, autoacetylation at Lys-604 is required for proper function. Autoacetylated. Phosphorylation at Thr-369 by PKB/AKT1 inhibits its interaction with PML and negatively regulates its acetylation activity towards p53/TP53.

Its subcellular location is the nucleus. It localises to the nucleolus. The protein resides in the nucleoplasm. It is found in the PML body. The catalysed reaction is L-lysyl-[protein] + acetyl-CoA = N(6)-acetyl-L-lysyl-[protein] + CoA + H(+). Functionally, histone acetyltransferase that acetylates lysine residues in histone H3 and histone H4 (in vitro). Component of the MOZ/MORF complex which has a histone H3 acetyltransferase activity. May act as a transcriptional coactivator for RUNX1 and RUNX2. Acetylates p53/TP53 at 'Lys-120' and 'Lys-382' and controls its transcriptional activity via association with PML. This Homo sapiens (Human) protein is Histone acetyltransferase KAT6A (KAT6A).